The following is a 66-amino-acid chain: Small ribosomal subunit protein bS21 (66 aa).

This sequence belongs to the bacterial ribosomal protein bS21 family.

This is Small ribosomal subunit protein bS21 from Persephonella marina (strain DSM 14350 / EX-H1).